Here is a 228-residue protein sequence, read N- to C-terminus: uncharacterized protein (228 aa).

Disordered stretches follow at residues 1–62 (MQRP…VGRF) and 160–228 (SPRP…LSGV). The span at 13–33 (AASTRAPPRPSAPQQGRRQPS) shows a compositional bias: low complexity. A compositionally biased stretch (polar residues) spans 167–176 (RGQQVTQDGP).

This is an uncharacterized protein from Homo sapiens (Human).